The primary structure comprises 424 residues: MEQWKVMVLICMYGAVKEFRPTEPYMYEYQHTVLNMSEQTLNSQVYPIWTYSYLITLIPAFLLTDVFLYKPLLVFEAFSYFLCWVIFVFGKSVWSQQVLEVFYGWATATEIAYFAYIYVKVPKTEYKSATAFTRAALLVGRFLAYALAQLLIGLNWTSYSTLNIISLVAMTIAVFLALILPGVEWKEAYEKKLEDNNVQGNLKEIVDQSSYMDYLRMFFVGLRHNLMAIYRNPLILKWSVWSALSSCIFYQVTNYTQTLWGTLPESANRYNGITEALVPLLGIPADLITRQLNVNWNRWGDLLLAVGSIGQAGLLFWMSQSHHIVVLYLSYIFYRVIYQLTTTIAQSTLAFSLDSRLFGLLFGINTFVALLLQSILTAVVIDWQKLDIRPQFVVYSCYHLVVAFGFAIIFGIWASRRFFKTSTN.

The N-linked (GlcNAc...) asparagine glycan is linked to Asn35. Helical transmembrane passes span 48–68 (IWTY…DVFL), 71–91 (PLLV…VFGK), 99–119 (LEVF…YIYV), 136–156 (ALLV…GLNW), 164–184 (IISL…PGVE), and 233–253 (PLIL…YQVT). N-linked (GlcNAc...) asparagine glycosylation occurs at Asn254. 4 helical membrane-spanning segments follow: residues 299 to 319 (WGDL…FWMS), 324 to 344 (IVVL…TTTI), 361 to 381 (LFGI…AVVI), and 392 to 412 (FVVY…IFGI).

It belongs to the reduced folate carrier (RFC) transporter (TC 2.A.48) family.

The protein resides in the membrane. Its function is as follows. Unlike folt-1, does not appear to act as a folate transporter. The polypeptide is Folate-like transporter 2 (folt-2) (Caenorhabditis elegans).